A 156-amino-acid chain; its full sequence is Cyclic pyranopterin monophosphate synthase (156 aa).

Residues 73-75 and 110-111 contribute to the substrate site; these read LCH and ME. The active site involves Asp125.

It belongs to the MoaC family. In terms of assembly, homohexamer; trimer of dimers.

It catalyses the reaction (8S)-3',8-cyclo-7,8-dihydroguanosine 5'-triphosphate = cyclic pyranopterin phosphate + diphosphate. It functions in the pathway cofactor biosynthesis; molybdopterin biosynthesis. Catalyzes the conversion of (8S)-3',8-cyclo-7,8-dihydroguanosine 5'-triphosphate to cyclic pyranopterin monophosphate (cPMP). In Stutzerimonas stutzeri (strain A1501) (Pseudomonas stutzeri), this protein is Cyclic pyranopterin monophosphate synthase.